Here is a 454-residue protein sequence, read N- to C-terminus: tRNA modification GTPase MnmE (454 aa).

(6S)-5-formyl-5,6,7,8-tetrahydrofolate is bound by residues arginine 23, glutamate 80, and lysine 120. A TrmE-type G domain is found at 216–377 (GMKVVIAGRP…LRNHLKQSMG (162 aa)). Asparagine 226 contacts K(+). GTP-binding positions include 226–231 (NAGKSS), 245–251 (TDIAGTT), 270–273 (DTAG), 335–338 (NKAD), and 358–360 (SAR). Serine 230 contributes to the Mg(2+) binding site. Threonine 245, isoleucine 247, and threonine 250 together coordinate K(+). Threonine 251 is a binding site for Mg(2+). Lysine 454 lines the (6S)-5-formyl-5,6,7,8-tetrahydrofolate pocket.

Belongs to the TRAFAC class TrmE-Era-EngA-EngB-Septin-like GTPase superfamily. TrmE GTPase family. As to quaternary structure, homodimer. Heterotetramer of two MnmE and two MnmG subunits. The cofactor is K(+).

It is found in the cytoplasm. Functionally, exhibits a very high intrinsic GTPase hydrolysis rate. Involved in the addition of a carboxymethylaminomethyl (cmnm) group at the wobble position (U34) of certain tRNAs, forming tRNA-cmnm(5)s(2)U34. The chain is tRNA modification GTPase MnmE from Salmonella typhi.